Here is a 1162-residue protein sequence, read N- to C-terminus: Enhanced level of genomic instability 1 (1162 aa).

7 disordered regions span residues 1-136 (MTDV…ADNQ), 144-163 (KAGK…KPKP), 179-202 (LGVN…ATPT), 249-319 (KTDA…TKKR), 348-380 (METP…RRSC), 611-634 (RSME…PNGE), and 666-697 (WSGN…SSSN). The segment covering 65-78 (KQKHREKHKRKREE) has biased composition (basic residues). Positions 79–111 (KRRAALMEDQKSTTEEVKANAKEKPQPLREKSS) are enriched in basic and acidic residues. Positions 125–136 (PLKSSTPVADNQ) are enriched in polar residues. Residues 268-278 (KRLRGRPRSRR) are compositionally biased toward basic residues. Composition is skewed to low complexity over residues 666–676 (WSGNGGSNRNS) and 684–697 (DMSN…SSSN). 703–710 (GPSSSGKT) contacts ATP. Disordered regions lie at residues 900 to 923 (GDST…SRLA) and 975 to 1008 (QAAG…SDGH). Over residues 984–993 (AAKRKSRSPK) the composition is skewed to basic residues. Polar residues predominate over residues 998 to 1008 (SSATGQKSDGH).

The protein belongs to the ELG1 family. As to quaternary structure, component of a heteropentameric Elg1 RFC-like complex composed of one large subunit (elg1) and four small subunits (RfC4, RfC38, CG8142 and RfC3). As part of the complex, might interact with the Enok complex, composed of enok, Br140, Eaf6 and Ing5. Within the Enok complex, interacts directly with Br140. In terms of tissue distribution, expressed at higher levels in the germline nurse cells than in the somatic follicle cells.

Its subcellular location is the nucleus. Functionally, has an important role in DNA replication and in maintaining genome integrity during replication stress. Promotes PCNA deubiquitination. As component of the Elg1 RFC-like complex, regulates the functions of the DNA polymerase processivity factor PCNA by unloading it from DNA after replication during the S phase of the cell cycle. The PCNA-unloading might be regulated via interaction with the Enok acetyltransferase complex. Might have a role in restarting of stalled/regressed replication forks during replication stress. In the ovaries, has a role in nurse cell endoreplication. In Drosophila melanogaster (Fruit fly), this protein is Enhanced level of genomic instability 1.